The chain runs to 322 residues: Mitochondrial uncoupling protein 4 (322 aa).

3 Solcar repeats span residues 20 to 114, 124 to 216, and 225 to 316; these read SKFL…LREV, YPLW…VKHY, and DNIS…IREM. The next 6 helical transmembrane spans lie at 22–39, 87–108, 126–143, 194–211, 228–247, and 287–310; these read FLLS…TFPL, WQGV…MVTY, LWKS…GQFL, PNIQ…TTYD, STHG…LGTP, and SLYK…WLTY.

This sequence belongs to the mitochondrial carrier (TC 2.A.29) family. Homotetramer.

It is found in the mitochondrion inner membrane. Its subcellular location is the cell projection. It localises to the neuron projection. The enzyme catalyses H(+)(in) = H(+)(out). It carries out the reaction chloride(in) = chloride(out). In terms of biological role, facilitates proton transport across the inner mitochondrial membrane and may dissipate excessive proton gradient associated with oxidative and metabolic stress at neuronal synapses. Regulates glutamate-induced proton conductance in astrocytes, shifting the energy metabolism toward aerobic glycolysis and lactate transfer to neurons for ATP synthesis. Can transport chloride ions with lower efficiency. The transport mechanism remains to be elucidated. In Mus musculus (Mouse), this protein is Mitochondrial uncoupling protein 4.